Consider the following 331-residue polypeptide: Thiamine-monophosphate kinase (331 aa).

4 residues coordinate Mg(2+): D43, T59, T60, and D61. A substrate-binding site is contributed by H68. 3 residues coordinate Mg(2+): D90, D138, and D231. 137-138 (GD) provides a ligand contact to ATP. Position 233 (S233) interacts with ATP. D234 contacts Mg(2+). E284 and W328 together coordinate substrate.

It belongs to the thiamine-monophosphate kinase family.

It catalyses the reaction thiamine phosphate + ATP = thiamine diphosphate + ADP. The protein operates within cofactor biosynthesis; thiamine diphosphate biosynthesis; thiamine diphosphate from thiamine phosphate: step 1/1. Functionally, catalyzes the ATP-dependent phosphorylation of thiamine-monophosphate (TMP) to form thiamine-pyrophosphate (TPP), the active form of vitamin B1. This Corynebacterium glutamicum (strain ATCC 13032 / DSM 20300 / JCM 1318 / BCRC 11384 / CCUG 27702 / LMG 3730 / NBRC 12168 / NCIMB 10025 / NRRL B-2784 / 534) protein is Thiamine-monophosphate kinase.